A 393-amino-acid polypeptide reads, in one-letter code: Acetate kinase (393 aa).

Asparagine 7 serves as a coordination point for Mg(2+). An ATP-binding site is contributed by lysine 14. A substrate-binding site is contributed by arginine 89. Residue aspartate 146 is the Proton donor/acceptor of the active site. Residues 204–208 (HIGNG), 279–281 (DSR), and 327–331 (GIGEN) each bind ATP. A Mg(2+)-binding site is contributed by glutamate 379.

Belongs to the acetokinase family. Homodimer. It depends on Mg(2+) as a cofactor. Mn(2+) is required as a cofactor.

Its subcellular location is the cytoplasm. The catalysed reaction is acetate + ATP = acetyl phosphate + ADP. It functions in the pathway metabolic intermediate biosynthesis; acetyl-CoA biosynthesis; acetyl-CoA from acetate: step 1/2. In terms of biological role, catalyzes the formation of acetyl phosphate from acetate and ATP. Can also catalyze the reverse reaction. The protein is Acetate kinase of Acholeplasma laidlawii (strain PG-8A).